Here is a 199-residue protein sequence, read N- to C-terminus: NAD(P)H dehydrogenase (quinone) (199 aa).

Residues 4-190 enclose the Flavodoxin-like domain; that stretch reads VLVLYYSAYG…AGARYQGRMI (187 aa). Residues 10 to 15 and 78 to 80 contribute to the FMN site; these read SAYGHI and TRF. Residue Tyr-12 participates in NAD(+) binding. Substrate is bound at residue Trp-98. Residues 113–119 and His-134 contribute to the FMN site; that span reads SSATQHG.

It belongs to the WrbA family. It depends on FMN as a cofactor.

The catalysed reaction is a quinone + NADH + H(+) = a quinol + NAD(+). It carries out the reaction a quinone + NADPH + H(+) = a quinol + NADP(+). The polypeptide is NAD(P)H dehydrogenase (quinone) (Nitrobacter winogradskyi (strain ATCC 25391 / DSM 10237 / CIP 104748 / NCIMB 11846 / Nb-255)).